Consider the following 210-residue polypeptide: Cell wall protein SRL1 (210 aa).

The first 19 residues, 1 to 19, serve as a signal peptide directing secretion; the sequence is MLQSVVFFALLTFASSVSA. Asn-23 is a glycosylation site (N-linked (GlcNAc...) asparagine). Disordered stretches follow at residues 80-99 and 118-142; these read SLST…HEIT and LSPS…VKSF. Residues 118 to 127 show a composition bias toward low complexity; the sequence is LSPSSTAASV. The segment covering 132 to 141 has biased composition (basic and acidic residues); it reads SNNKDAKVKS. 3 N-linked (GlcNAc...) asparagine glycosylation sites follow: Asn-174, Asn-200, and Asn-206.

Its subcellular location is the secreted. It is found in the cell wall. The protein resides in the cell surface. In terms of biological role, required to stabilize the cell wall in the absence of multiple GPI-anchored mannoproteins. The protein is Cell wall protein SRL1 (SRL1) of Saccharomyces cerevisiae (strain ATCC 204508 / S288c) (Baker's yeast).